The following is a 1363-amino-acid chain: Insulin-like peptide receptor (1363 aa).

The first 29 residues, 1–29 (MRVVDKMAGLMWAALTLVIGLGLLVPSNG), serve as a signal peptide directing secretion. 16 N-linked (GlcNAc...) asparagine glycosylation sites follow: asparagine 51, asparagine 97, asparagine 137, asparagine 278, asparagine 483, asparagine 599, asparagine 617, asparagine 665, asparagine 666, asparagine 711, asparagine 732, asparagine 736, asparagine 743, asparagine 816, asparagine 885, and asparagine 898. Fibronectin type-III domains lie at 473–586 (SFSR…TDAD) and 590–680 (HPQD…CPKS). Fibronectin type-III domains follow at residues 712-804 (ETRA…LART) and 813-912 (IPGN…VEEE). The Extracellular segment spans residues 721-928 (ELPVTARPFY…QDPQQQVPVS (208 aa)). Residues 739–759 (LPSTNRTVPPTPTPNPNPQLE) form a disordered region. A helical transmembrane segment spans residues 929 to 949 (LMIGMGVGFSLLLILAVIFGI). Over 950–1363 (WYCTKKRFGD…NLRIPKSTLC (414 aa)) the chain is Cytoplasmic. The 290-residue stretch at 994–1283 (ITLIRELGQG…EIVEILSPEL (290 aa)) folds into the Protein kinase domain. Residues 1000-1008 (LGQGSFGMV) and lysine 1028 each bind ATP. A disordered region spans residues 1091–1117 (PEEDVGLSDSPASNEAKNSPFAENDND). The active-site Proton acceptor is aspartate 1148. Residue tyrosine 1174 is modified to Phosphotyrosine; by autocatalysis. The tract at residues 1316–1363 (DTETEMYPSGSEFSSTPSPPSETPYSHMNGSHPQNGSMNLRIPKSTLC) is disordered. Residues 1322–1331 (YPSGSEFSST) show a composition bias toward low complexity. The span at 1343–1353 (MNGSHPQNGSM) shows a compositional bias: polar residues.

Belongs to the protein kinase superfamily. Tyr protein kinase family. Insulin receptor subfamily. Probable tetramer of 2 alpha and 2 beta chains linked by disulfide bonds. The alpha chains contribute to the formation of the ligand-binding domain, while the beta chains carry the kinase domain. Requires Mn(2+) as cofactor.

The protein resides in the membrane. It carries out the reaction L-tyrosyl-[protein] + ATP = O-phospho-L-tyrosyl-[protein] + ADP + H(+). Functionally, this receptor binds to the insulin related peptide and has a tyrosine-protein kinase activity. This chain is Insulin-like peptide receptor, found in Branchiostoma lanceolatum (Common lancelet).